Consider the following 233-residue polypeptide: Purine nucleoside phosphorylase DeoD-type (233 aa).

His4 lines the a purine D-ribonucleoside pocket. Phosphate-binding positions include Gly20, Arg24, Arg43, and Arg87 to Ser90. Residues Glu178–Glu180 and Ser202–Asp203 each bind a purine D-ribonucleoside. Asp203 serves as the catalytic Proton donor.

Belongs to the PNP/UDP phosphorylase family. In terms of assembly, homohexamer; trimer of homodimers.

The catalysed reaction is a purine D-ribonucleoside + phosphate = a purine nucleobase + alpha-D-ribose 1-phosphate. It catalyses the reaction a purine 2'-deoxy-D-ribonucleoside + phosphate = a purine nucleobase + 2-deoxy-alpha-D-ribose 1-phosphate. Its function is as follows. Catalyzes the reversible phosphorolytic breakdown of the N-glycosidic bond in the beta-(deoxy)ribonucleoside molecules, with the formation of the corresponding free purine bases and pentose-1-phosphate. The protein is Purine nucleoside phosphorylase DeoD-type of Bacillus subtilis (strain 168).